Here is a 510-residue protein sequence, read N- to C-terminus: Guanosine import ATP-binding protein NupO (510 aa).

ABC transporter domains are found at residues 5 to 240 (IEML…VGRE) and 257 to 501 (LAID…AGST). Position 37–44 (37–44 (GENGAGKS)) interacts with ATP.

It belongs to the ABC transporter superfamily. As to quaternary structure, the complex is composed of two ATP-binding proteins (NupO), two transmembrane proteins (NupP and NupQ) and a solute-binding protein (NupN).

Its subcellular location is the cell membrane. Its function is as follows. Part of an ABC transporter complex involved in the uptake of guanosine. Responsible for energy coupling to the transport system. May be a nucleoside transporter of broad specificity but with various affinities for different substrates. The polypeptide is Guanosine import ATP-binding protein NupO (Bacillus subtilis (strain 168)).